Consider the following 655-residue polypeptide: A-type voltage-gated potassium channel KCND3 (655 aa).

At 1-182 the chain is on the cytoplasmic side; the sequence is MAAGVAAWLP…FENPHTSTLA (182 aa). An interaction with KCNIP1 and KCNIP2 region spans residues 6-21; it reads AAWLPFARAAAIGWMP. Residues 70–78 are interaction with KCNIP1; it reads EKEFFFNED. Residues His104, Cys110, Cys131, and Cys132 each coordinate Zn(2+). The residue at position 153 (Ser153) is a Phosphoserine. Residues 183 to 204 traverse the membrane as a helical segment; that stretch reads LVFYYVTGFFIAVSVITNVVET. Residues 205–223 are Extracellular-facing; that stretch reads VPCGTVPGSKELPCGERYS. A helical transmembrane segment spans residues 224-246; sequence VAFFCLDTACVMIFTVEYLLRLF. At 247–253 the chain is on the cytoplasmic side; the sequence is AAPSRYR. Residues 254–277 traverse the membrane as a helical segment; that stretch reads FIRSVMSIIDVVAIMPYYIGLVMT. Residues 278–283 lie on the Extracellular side of the membrane; that stretch reads NNEDVS. The chain crosses the membrane as a helical; Voltage-sensor span at residues 284 to 306; that stretch reads GAFVTLRVFRVFRIFKFSRHSQG. Over 307–318 the chain is Cytoplasmic; sequence LRILGYTLKSCA. The chain crosses the membrane as a helical span at residues 319 to 343; it reads SELGFLLFSLTMAIIIFATVMFYAE. Residues 344–352 lie on the Extracellular side of the membrane; sequence KGSSASKFT. An intramembrane region (helical) is located at residues 353-366; it reads SIPASFWYTIVTMT. K(+) contacts are provided by Thr367, Leu368, Gly369, and Tyr370. The short motif at 367–372 is the Selectivity filter element; the sequence is TLGYGD. Residues 367-374 lie within the membrane without spanning it; it reads TLGYGDMV. A helical membrane pass occupies residues 378–400; it reads IAGKIFGSICSLSGVLVIALPVP. Over 401 to 655 the chain is Cytoplasmic; sequence VIVSNFSRIY…ASNVVKVSAL (255 aa). The residue at position 459 (Thr459) is a Phosphothreonine. The interaction with KCNIP1 and KCNIP2 stretch occupies residues 470–487; that stretch reads SLIESQHHHLLHCLEKTT. The interval 472–487 is mediates dendritic targeting; the sequence is IESQHHHLLHCLEKTT. Residues 525-548 are compositionally biased toward polar residues; sequence MQNYPSTRSPSLSSHPGLTTTCCS. Residues 525-565 are disordered; that stretch reads MQNYPSTRSPSLSSHPGLTTTCCSRRSKKTTHLPNSNLPAT. Ser569 is modified (phosphoserine; by CaMK2D). Residue Ser585 is modified to Phosphoserine. The segment at 615–655 is disordered; the sequence is ISIPTPPALTPEGESRPPPASPGPNTNIPSIASNVVKVSAL. The span at 637–647 shows a compositional bias: polar residues; sequence GPNTNIPSIAS.

Belongs to the potassium channel family. D (Shal) (TC 1.A.1.2) subfamily. Kv4.3/KCND3 sub-subfamily. Homotetramer. Heterotetramer with KCND2. Associates with the regulatory subunits KCNIP3 and KCNIP4. Interacts with KCNE1, KCNE2, SCN1B and KCNAB1 and DLG1. Component of heteromultimeric potassium channels. Identified in potassium channel complexes containing KCND1, KCND2, KCND3, KCNIP1, KCNIP2, KCNIP3, KCNIP4, DPP6 and DPP10. Interacts with KCNIP1; each KCNIP1 monomer interacts with two adjacent KCND3 subunits, through both the N-terminal inactivation ball of a KCND3 subunit and a C-terminal helix from the adjacent KCND3 subunit, clamping them together; this interaction stabilizes the tetrameric form and modulates the channel gating kinetics namely channel activation and inactivation kinetics and rate of recovery from inactivation. Interacts with DPP6; this interaction modulates the channel gating kinetics namely channel activation and inactivation kinetics and rate of recovery from inactivation. Interacts with KCNIP2; each KCNIP2 monomer interacts with two adjacent KCND3 subunits, through both the N-terminal inactivation ball of a KCND3 subunit and a C-terminal helix from the adjacent KCND3 subunit, clamping them together; this interaction modulates the channel gating kinetics. In terms of processing, regulated through phosphorylation at Ser-569 by CaMK2D. Highly expressed in heart and brain, in particular in cortex, cerebellum, amygdala and caudate nucleus. Detected at lower levels in liver, skeletal muscle, kidney and pancreas.

The protein localises to the cell membrane. Its subcellular location is the sarcolemma. The protein resides in the cell projection. It localises to the dendrite. It carries out the reaction K(+)(in) = K(+)(out). Its function is as follows. Pore-forming (alpha) subunit of voltage-gated A-type potassium channels that mediates transmembrane potassium transport in excitable membranes, in brain and heart. In cardiomyocytes, may generate the transient outward potassium current I(To). In neurons, may conduct the transient subthreshold somatodendritic A-type potassium current (ISA). Kinetics properties are characterized by fast activation at subthreshold membrane potentials, rapid inactivation, and quick recovery from inactivation. Channel properties are modulated by interactions with regulatory subunits. Interaction with the regulatory subunits KCNIP1 or KCNIP2 modulates the channel gating kinetics namely channel activation and inactivation kinetics and rate of recovery from inactivation. Likewise, interaction with DPP6 modulates the channel gating kinetics namely channel activation and inactivation kinetics. In Homo sapiens (Human), this protein is A-type voltage-gated potassium channel KCND3 (KCND3).